We begin with the raw amino-acid sequence, 251 residues long: Imidazole glycerol phosphate synthase subunit HisF (251 aa).

Active-site residues include D11 and D130.

It belongs to the HisA/HisF family. In terms of assembly, heterodimer of HisH and HisF.

Its subcellular location is the cytoplasm. The enzyme catalyses 5-[(5-phospho-1-deoxy-D-ribulos-1-ylimino)methylamino]-1-(5-phospho-beta-D-ribosyl)imidazole-4-carboxamide + L-glutamine = D-erythro-1-(imidazol-4-yl)glycerol 3-phosphate + 5-amino-1-(5-phospho-beta-D-ribosyl)imidazole-4-carboxamide + L-glutamate + H(+). It participates in amino-acid biosynthesis; L-histidine biosynthesis; L-histidine from 5-phospho-alpha-D-ribose 1-diphosphate: step 5/9. Functionally, IGPS catalyzes the conversion of PRFAR and glutamine to IGP, AICAR and glutamate. The HisF subunit catalyzes the cyclization activity that produces IGP and AICAR from PRFAR using the ammonia provided by the HisH subunit. The chain is Imidazole glycerol phosphate synthase subunit HisF from Listeria welshimeri serovar 6b (strain ATCC 35897 / DSM 20650 / CCUG 15529 / CIP 8149 / NCTC 11857 / SLCC 5334 / V8).